A 70-amino-acid polypeptide reads, in one-letter code: Conotoxin Im11.11 (70 aa).

Positions 1-25 (MFRLTSVGCILLVIAFLNLVGLTNA) are cleaved as a signal peptide. 4 cysteine pairs are disulfide-bonded: Cys26-Cys40, Cys33-Cys45, Cys39-Cys49, and Cys44-Cys53. Pro56 is subject to Proline amide. The propeptide occupies 60–70 (TRLQGFFKHRR).

The protein belongs to the conotoxin I2 superfamily. Expressed by the venom duct.

It is found in the secreted. In terms of biological role, probable neurotoxin. This Conus imperialis (Imperial cone) protein is Conotoxin Im11.11.